The primary structure comprises 55 residues: Potassium channel toxin alpha-KTx 17.1 (55 aa).

An N-terminal signal peptide occupies residues 1 to 23 (MKFIIVLILISVLIATIVPVNEA). Gln24 is subject to Pyrrolidone carboxylic acid. 3 cysteine pairs are disulfide-bonded: Cys27–Cys43, Cys33–Cys48, and Cys37–Cys50. Thr53 is modified (threonine amide).

It belongs to the short scorpion toxin superfamily. Potassium channel inhibitor family. Alpha-KTx 17 subfamily. Expressed by the venom gland.

The protein resides in the secreted. In terms of biological role, blocker of potassium channels, which inhibits both the delayed rectifier and fast transient potassium current. The inhibition is reversible and voltage-independent. It causes a depolarizing shift of the steady-state activation curve of the currents, without changing their steady-state inactivation behavior. This chain is Potassium channel toxin alpha-KTx 17.1, found in Olivierus martensii (Manchurian scorpion).